The primary structure comprises 358 residues: GVVMYTTSSITATLGFPKDMWIGRSFIDFLHPKDANTFASQITNGLAIPKIVNDTQEKAQIFGTQGSTMVCRIRRYRGLSSGFGVKDTSVSYMPFLLKFRFRNISDDKGLVVYLVIQTVPFFSAYKTPNEILTQEVSFIMRHSANGNLEYIDPDCVPYLGYIPQDITNRNALVLYHPGDLPFLQEVYQAIVKEGSVTRSKSYRMVTQNGHFIKVETEWSAFINPWSRKLEFVNGKYYIIEGPANPDVFESPDPEKTPKLTEERKNQAQICRDDIIRIMNEVLTNPAEIAKQQMSKRCQELALFMEILQEEQPKAEEEFHLQTQDVDHTYYERDSVMLGGISPHHEYNDIKSSAETSLS.

PAS domains follow at residues 1–120 (GVVM…QTVP) and 138–240 (FIMR…YIIE).

In terms of assembly, forms a heterodimer with timeless (TIM); the complex then translocates into the nucleus. Post-translationally, phosphorylated with a circadian rhythmicity.

It localises to the nucleus. Its function is as follows. Involved in the generation of biological rhythms. The biological cycle depends on the rhythmic formation and nuclear localization of the tim-per complex. Light induces the degradation of tim, which promotes elimination of per. Nuclear activity of the heterodimer coordinatively regulates per and tim transcription negative feedback loop. Behaves as a negative element in circadian transcriptional loop. Does not appear to bind DNA, suggesting indirect transcriptional inhibition. The polypeptide is Period circadian protein (per) (Hyalophora cecropia (Cecropia moth)).